The following is a 473-amino-acid chain: Photosystem II CP43 reaction center protein (473 aa).

Positions 1-14 are excised as a propeptide; the sequence is MKTLYSLRRFYHVE. Thr15 is modified (N-acetylthreonine). At Thr15 the chain carries Phosphothreonine. 5 helical membrane passes run 69-93, 134-155, 178-200, 255-275, and 291-312; these read LFEV…PHLA, LLGP…KDRN, KALY…RKIT, KPFA…LSYS, and WFNN…ASQA. Residue Glu367 coordinates [CaMn4O5] cluster. Residues 447-471 traverse the membrane as a helical segment; the sequence is RARAAAAGFEKGIDRDFEPVLSMTP.

It belongs to the PsbB/PsbC family. PsbC subfamily. As to quaternary structure, PSII is composed of 1 copy each of membrane proteins PsbA, PsbB, PsbC, PsbD, PsbE, PsbF, PsbH, PsbI, PsbJ, PsbK, PsbL, PsbM, PsbT, PsbX, PsbY, PsbZ, Psb30/Ycf12, at least 3 peripheral proteins of the oxygen-evolving complex and a large number of cofactors. It forms dimeric complexes. Binds multiple chlorophylls and provides some of the ligands for the Ca-4Mn-5O cluster of the oxygen-evolving complex. It may also provide a ligand for a Cl- that is required for oxygen evolution. PSII binds additional chlorophylls, carotenoids and specific lipids. serves as cofactor.

Its subcellular location is the plastid. It is found in the chloroplast thylakoid membrane. In terms of biological role, one of the components of the core complex of photosystem II (PSII). It binds chlorophyll and helps catalyze the primary light-induced photochemical processes of PSII. PSII is a light-driven water:plastoquinone oxidoreductase, using light energy to abstract electrons from H(2)O, generating O(2) and a proton gradient subsequently used for ATP formation. The polypeptide is Photosystem II CP43 reaction center protein (Crucihimalaya wallichii (Rock-cress)).